A 342-amino-acid chain; its full sequence is S-adenosylmethionine:tRNA ribosyltransferase-isomerase (342 aa).

The protein belongs to the QueA family. In terms of assembly, monomer.

The protein resides in the cytoplasm. The catalysed reaction is 7-aminomethyl-7-carbaguanosine(34) in tRNA + S-adenosyl-L-methionine = epoxyqueuosine(34) in tRNA + adenine + L-methionine + 2 H(+). Its pathway is tRNA modification; tRNA-queuosine biosynthesis. Transfers and isomerizes the ribose moiety from AdoMet to the 7-aminomethyl group of 7-deazaguanine (preQ1-tRNA) to give epoxyqueuosine (oQ-tRNA). This chain is S-adenosylmethionine:tRNA ribosyltransferase-isomerase, found in Geobacillus kaustophilus (strain HTA426).